The sequence spans 184 residues: Myosin regulatory light chain 1 (184 aa).

The segment at 1-29 (MFSSKENSLGAKRAPFSSNTTSSQRVAAQ) is disordered. Ser-36 is modified (phosphoserine). EF-hand domains lie at 45–80 (SQIQ…LNQD) and 114–149 (SPRN…MGDR). The Ca(2+) site is built by Asp-58, Asp-60, Asp-62, Asn-64, and Asp-69.

As to quaternary structure, binds to myosin II chains myo2 and myo3.

It is found in the cytoplasm. The polypeptide is Myosin regulatory light chain 1 (rlc1) (Schizosaccharomyces pombe (strain 972 / ATCC 24843) (Fission yeast)).